The following is a 754-amino-acid chain: ToMV susceptible protein tm-1(GCR26) (754 aa).

Residues 1–201 (MATAQSNSPR…AGMVIGRLES (201 aa)) form an N-terminal inhibitory domain NN region. Residues 18–20 (DTK), threonine 55, arginine 92, and 124–127 (GSGG) contribute to the ATP site. The interval 211–431 (KFTVGVTMFG…VDSFLEMSPK (221 aa)) is N-terminal inhibitory domain NC.

The protein belongs to the UPF0261 family. As to quaternary structure, homodimer. (Microbial infection) Binds, via an ATP bridge, to the tobamoviruses avirulent (Avr) replication proteins (large and small subunits, e.g. tobacco mild green mosaic virus (TMGMV) AC P18339 and pepper mild mottle virus (PMMoV) AC P89657) to inhibit their function after the translation of tobamoviruses RNA, but before the viral replication complex formation on the membrane surfaces; this interaction is not possible with resistance-breaking strains replication proteins.

Inhibitor of viral RNA replication which confers resistance to some tobamoviruses including tobacco mild green mosaic virus (TMGMV) and pepper mild mottle virus (PMMoV), but not to tomato mosaic virus (ToMV strains L, ToMV0 and ToMV1-2) and tobacco mosaic virus (TMV). Prevents tobamoviruses RNA replication by affecting the association of tobamoviruses replication proteins (large and small subunits) with host membrane-associated proteins (e.g. TOM1, TOM2A and ARL8), thus inhibiting the replication complex formation on the membranes and avoiding viral negative-strand RNA synthesis. The chain is ToMV susceptible protein tm-1(GCR26) from Solanum lycopersicum (Tomato).